Reading from the N-terminus, the 163-residue chain is MHLLADPETWVAIAFVILMGLFAYLGVHRTVLKALDHRAERIRNELEEAKRLKQEAAKVLADYKARRASAEREAEEIVTSAKAEAERIAADAKAKMEDFVARRTKAAESKIALAEAQALADVRSAAADAAVQAAATVLSQSVKGSLGEDLVAKGIAEVGRKLN.

Residues 7 to 27 form a helical membrane-spanning segment; that stretch reads PETWVAIAFVILMGLFAYLGV.

It belongs to the ATPase B chain family. In terms of assembly, F-type ATPases have 2 components, F(1) - the catalytic core - and F(0) - the membrane proton channel. F(1) has five subunits: alpha(3), beta(3), gamma(1), delta(1), epsilon(1). F(0) has three main subunits: a(1), b(2) and c(10-14). The alpha and beta chains form an alternating ring which encloses part of the gamma chain. F(1) is attached to F(0) by a central stalk formed by the gamma and epsilon chains, while a peripheral stalk is formed by the delta and b chains.

It is found in the cell inner membrane. F(1)F(0) ATP synthase produces ATP from ADP in the presence of a proton or sodium gradient. F-type ATPases consist of two structural domains, F(1) containing the extramembraneous catalytic core and F(0) containing the membrane proton channel, linked together by a central stalk and a peripheral stalk. During catalysis, ATP synthesis in the catalytic domain of F(1) is coupled via a rotary mechanism of the central stalk subunits to proton translocation. Its function is as follows. Component of the F(0) channel, it forms part of the peripheral stalk, linking F(1) to F(0). The polypeptide is ATP synthase subunit b 1 (Bradyrhizobium sp. (strain BTAi1 / ATCC BAA-1182)).